Reading from the N-terminus, the 950-residue chain is Zinc finger CCCH domain-containing protein 3 (950 aa).

4 disordered regions span residues 32–106, 127–182, 201–220, and 314–489; these read GNSS…HPEP, IKPP…TKVG, VVKSVGRVSDSSPEHRRTVS, and SEKS…VLRK. The span at 56-74 shows a compositional bias: basic residues; sequence RPSRRGFSSHHGPSWRKKY. The span at 76–96 shows a compositional bias: polar residues; sequence LVNQPVESSDPASDPAFQTSL. Positions 327-338 are enriched in polar residues; the sequence is PRTTLESGNKAT. A compositionally biased stretch (basic and acidic residues) spans 344 to 360; it reads KTEKPQPKVDPEVRPEK. Residues 370 to 388 are compositionally biased toward low complexity; the sequence is SPSKYKWKASSPSASSSSS. The span at 402-412 shows a compositional bias: polar residues; it reads SQLSPVPSRPT. Position 405 is a phosphoserine (S405). A compositionally biased stretch (basic residues) spans 438 to 449; sequence VKSRTKIIRRRG. Polar residues predominate over residues 460–470; it reads SPTTATTSKNH. 5 C3H1-type zinc fingers span residues 662–690, 694–717, 718–744, 745–772, and 773–795; these read EKKREYCMYYNRFGRCNRGECCPYIHDPE, VCTRFVRGTCKKTDGSCPFSHHVS, KEKMPVCSYFLKGICSNSNCPYSHVYV, SRKAEVCSDFLKGYCPLGAKCKKKHTLL, and CPDFARRGICPRGSQCQLLHRNQ. Residues 793-950 form a disordered region; that stretch reads RNQKRHGRRT…GKPLHIKPRL (158 aa). A compositionally biased stretch (polar residues) spans 828–838; it reads PTTTQRSVRQM. A compositionally biased stretch (low complexity) spans 839–849; it reads SSGLASGAEAP. Phosphoserine occurs at positions 851 and 855. Residues 857-888 are compositionally biased toward low complexity; sequence RVLASTSTLSSKATAASSPSPSPSTSSPAPSL. Positions 914–928 are enriched in polar residues; that stretch reads SLHSSPSPGGQTETG. A phosphoserine mark is found at S918, S920, and S934.

In terms of assembly, interacts with SMAD1, SMAD3, SMAD4, CPSF2 and CPSF3.

Its subcellular location is the nucleus. In terms of biological role, required for the export of polyadenylated mRNAs from the nucleus. Enhances ACVR1B-induced SMAD-dependent transcription. Binds to single-stranded DNA but not to double-stranded DNA in vitro. Involved in RNA cleavage. The protein is Zinc finger CCCH domain-containing protein 3 (Zc3h3) of Mus musculus (Mouse).